The primary structure comprises 335 residues: Holliday junction branch migration complex subunit RuvB (335 aa).

The large ATPase domain (RuvB-L) stretch occupies residues 4–183 (ADNLNVTSII…FGIVQRLEFY (180 aa)). ATP is bound by residues arginine 23, glycine 64, lysine 67, threonine 68, threonine 69, 130 to 132 (EDY), arginine 173, tyrosine 183, and arginine 220. Position 68 (threonine 68) interacts with Mg(2+). Positions 184–254 (PTKDLQNIIS…VAMNALNMLN (71 aa)) are small ATPAse domain (RuvB-S). The segment at 257 to 335 (TAGFNFMDRQ…HFSLKQSRDI (79 aa)) is head domain (RuvB-H). Residues arginine 293, arginine 312, and arginine 317 each coordinate DNA.

The protein belongs to the RuvB family. As to quaternary structure, homohexamer. Forms an RuvA(8)-RuvB(12)-Holliday junction (HJ) complex. HJ DNA is sandwiched between 2 RuvA tetramers; dsDNA enters through RuvA and exits via RuvB. An RuvB hexamer assembles on each DNA strand where it exits the tetramer. Each RuvB hexamer is contacted by two RuvA subunits (via domain III) on 2 adjacent RuvB subunits; this complex drives branch migration. In the full resolvosome a probable DNA-RuvA(4)-RuvB(12)-RuvC(2) complex forms which resolves the HJ.

Its subcellular location is the cytoplasm. The enzyme catalyses ATP + H2O = ADP + phosphate + H(+). Functionally, the RuvA-RuvB-RuvC complex processes Holliday junction (HJ) DNA during genetic recombination and DNA repair, while the RuvA-RuvB complex plays an important role in the rescue of blocked DNA replication forks via replication fork reversal (RFR). RuvA specifically binds to HJ cruciform DNA, conferring on it an open structure. The RuvB hexamer acts as an ATP-dependent pump, pulling dsDNA into and through the RuvAB complex. RuvB forms 2 homohexamers on either side of HJ DNA bound by 1 or 2 RuvA tetramers; 4 subunits per hexamer contact DNA at a time. Coordinated motions by a converter formed by DNA-disengaged RuvB subunits stimulates ATP hydrolysis and nucleotide exchange. Immobilization of the converter enables RuvB to convert the ATP-contained energy into a lever motion, pulling 2 nucleotides of DNA out of the RuvA tetramer per ATP hydrolyzed, thus driving DNA branch migration. The RuvB motors rotate together with the DNA substrate, which together with the progressing nucleotide cycle form the mechanistic basis for DNA recombination by continuous HJ branch migration. Branch migration allows RuvC to scan DNA until it finds its consensus sequence, where it cleaves and resolves cruciform DNA. This chain is Holliday junction branch migration complex subunit RuvB, found in Baumannia cicadellinicola subsp. Homalodisca coagulata.